We begin with the raw amino-acid sequence, 533 residues long: L-aspartate oxidase 1 (533 aa).

Residues 10–13 (SGLA), K32, 39–46 (ASDWAQGG), and D214 contribute to the FAD site. Catalysis depends on R281, which acts as the Proton donor/acceptor. FAD-binding positions include E366 and 382–383 (SL).

It belongs to the FAD-dependent oxidoreductase 2 family. NadB subfamily. FAD is required as a cofactor.

The protein localises to the cytoplasm. The enzyme catalyses L-aspartate + O2 = iminosuccinate + H2O2. It participates in cofactor biosynthesis; NAD(+) biosynthesis; iminoaspartate from L-aspartate (oxidase route): step 1/1. Its function is as follows. Catalyzes the oxidation of L-aspartate to iminoaspartate, the first step in the de novo biosynthesis of NAD(+). The chain is L-aspartate oxidase 1 (nadB1) from Ralstonia nicotianae (strain ATCC BAA-1114 / GMI1000) (Ralstonia solanacearum).